A 397-amino-acid polypeptide reads, in one-letter code: Chorismate synthase (397 aa).

Positions 40 and 46 each coordinate NADP(+). FMN contacts are provided by residues 129 to 131 (RAS), 257 to 258 (QA), glycine 302, 317 to 321 (KPIAT), and arginine 343.

Belongs to the chorismate synthase family. As to quaternary structure, homotetramer. It depends on FMNH2 as a cofactor.

It catalyses the reaction 5-O-(1-carboxyvinyl)-3-phosphoshikimate = chorismate + phosphate. Its pathway is metabolic intermediate biosynthesis; chorismate biosynthesis; chorismate from D-erythrose 4-phosphate and phosphoenolpyruvate: step 7/7. Functionally, catalyzes the anti-1,4-elimination of the C-3 phosphate and the C-6 proR hydrogen from 5-enolpyruvylshikimate-3-phosphate (EPSP) to yield chorismate, which is the branch point compound that serves as the starting substrate for the three terminal pathways of aromatic amino acid biosynthesis. This reaction introduces a second double bond into the aromatic ring system. The chain is Chorismate synthase from Chlorobium phaeobacteroides (strain BS1).